The primary structure comprises 139 residues: Translation initiation factor 2 subunit beta (139 aa).

It belongs to the eIF-2-beta/eIF-5 family. In terms of assembly, heterotrimer composed of an alpha, a beta and a gamma chain.

EIF-2 functions in the early steps of protein synthesis by forming a ternary complex with GTP and initiator tRNA. This is Translation initiation factor 2 subunit beta from Methanococcus aeolicus (strain ATCC BAA-1280 / DSM 17508 / OCM 812 / Nankai-3).